A 245-amino-acid chain; its full sequence is Enolase-phosphatase E1 (245 aa).

It belongs to the HAD-like hydrolase superfamily. MasA/MtnC family. As to quaternary structure, monomer. It depends on Mg(2+) as a cofactor.

The enzyme catalyses 5-methylsulfanyl-2,3-dioxopentyl phosphate + H2O = 1,2-dihydroxy-5-(methylsulfanyl)pent-1-en-3-one + phosphate. Its pathway is amino-acid biosynthesis; L-methionine biosynthesis via salvage pathway; L-methionine from S-methyl-5-thio-alpha-D-ribose 1-phosphate: step 3/6. It participates in amino-acid biosynthesis; L-methionine biosynthesis via salvage pathway; L-methionine from S-methyl-5-thio-alpha-D-ribose 1-phosphate: step 4/6. In terms of biological role, bifunctional enzyme that catalyzes the enolization of 2,3-diketo-5-methylthiopentyl-1-phosphate (DK-MTP-1-P) into the intermediate 2-hydroxy-3-keto-5-methylthiopentenyl-1-phosphate (HK-MTPenyl-1-P), which is then dephosphorylated to form the acireductone 1,2-dihydroxy-3-keto-5-methylthiopentene (DHK-MTPene). The protein is Enolase-phosphatase E1 of Synechococcus sp. (strain CC9902).